Here is a 355-residue protein sequence, read N- to C-terminus: Trans-3-hydroxy-L-proline dehydratase (355 aa).

Catalysis depends on C111, which acts as the Proton acceptor. Residues 112–113 and 276–277 contribute to the substrate site; these read GH and GS.

This sequence belongs to the proline racemase family. As to quaternary structure, homodimer.

The catalysed reaction is trans-3-hydroxy-L-proline = 1-pyrroline-2-carboxylate + H2O. Catalyzes the dehydration of trans-3-hydroxy-L-proline (t3LHyp) to Delta(1)-pyrroline-2-carboxylate (Pyr2C). Together with LhpI, is involved in a metabolic pathway that converts t3LHyp to L-proline. The polypeptide is Trans-3-hydroxy-L-proline dehydratase (Colwellia psychrerythraea (strain 34H / ATCC BAA-681) (Vibrio psychroerythus)).